The following is a 150-amino-acid chain: MVKARRQAKILELVRTRVIETQEELAAALAAEGIPVTQATISRDIKELQLTKVPMPDGRYRYALPEEPGAAAGERWRRIFREAVLTIDHSGNLVVIKSLPGTAQGVAAAIDHAGWPEMIGTVAGDDTVIVVVKPADATGEVAERLKGLMR.

It belongs to the ArgR family.

It is found in the cytoplasm. It participates in amino-acid biosynthesis; L-arginine biosynthesis [regulation]. Regulates arginine biosynthesis genes. This is Arginine repressor from Symbiobacterium thermophilum (strain DSM 24528 / JCM 14929 / IAM 14863 / T).